The following is a 352-amino-acid chain: Quinolinate synthase (352 aa).

Iminosuccinate-binding residues include histidine 48 and serine 69. Position 114 (cysteine 114) interacts with [4Fe-4S] cluster. Iminosuccinate-binding positions include tyrosine 140–asparagine 142 and serine 157. [4Fe-4S] cluster is bound at residue cysteine 201. Iminosuccinate contacts are provided by residues histidine 227–glutamate 229 and threonine 244. Residue cysteine 298 participates in [4Fe-4S] cluster binding.

The protein belongs to the quinolinate synthase family. Type 1 subfamily. The cofactor is [4Fe-4S] cluster.

It localises to the cytoplasm. The enzyme catalyses iminosuccinate + dihydroxyacetone phosphate = quinolinate + phosphate + 2 H2O + H(+). It participates in cofactor biosynthesis; NAD(+) biosynthesis; quinolinate from iminoaspartate: step 1/1. Functionally, catalyzes the condensation of iminoaspartate with dihydroxyacetone phosphate to form quinolinate. In Pseudomonas putida (strain ATCC 700007 / DSM 6899 / JCM 31910 / BCRC 17059 / LMG 24140 / F1), this protein is Quinolinate synthase.